A 332-amino-acid chain; its full sequence is NADH-quinone oxidoreductase subunit H (332 aa).

Helical transmembrane passes span 11–31 (TYKILFLLVPVLVSVAMIVWL), 77–97 (VIFILAPIVTMTLALVSWAVI), 110–130 (VGVLYLFAVSSLGVYGIIMGG), 156–176 (IGVIIINVLLCVGSLNLNDII), 182–202 (LWFIIPLFPMFVIFFISALAE), 240–260 (NILLMCAMGSILFLGGWLSPI), 268–288 (IPGAIWMIFKILFLFVLFALV), and 307–327 (IFLPLSLTWVVLTASYLFYFN).

This sequence belongs to the complex I subunit 1 family. As to quaternary structure, NDH-1 is composed of 14 different subunits. Subunits NuoA, H, J, K, L, M, N constitute the membrane sector of the complex.

The protein localises to the cell inner membrane. The catalysed reaction is a quinone + NADH + 5 H(+)(in) = a quinol + NAD(+) + 4 H(+)(out). NDH-1 shuttles electrons from NADH, via FMN and iron-sulfur (Fe-S) centers, to quinones in the respiratory chain. The immediate electron acceptor for the enzyme in this species is believed to be ubiquinone. Couples the redox reaction to proton translocation (for every two electrons transferred, four hydrogen ions are translocated across the cytoplasmic membrane), and thus conserves the redox energy in a proton gradient. This subunit may bind ubiquinone. The protein is NADH-quinone oxidoreductase subunit H of Pelagibacter ubique (strain HTCC1062).